Consider the following 286-residue polypeptide: MAENTMWHETLHDQFGQYFAVDNVLYHEKTDHQDLIIFENAAFGRVMALDGVVQTTERDEFIYHEMMTHVPLLAHGHAKHVLIIGGGDGAMLREVTRHKNVETITMVEIDAGVVSFCRQYLPNHNAGSYDDPRFTLVIDDGVNFVNQTHQTFDVIISDCTDPIGPGESLFTSAFYEGCKRCLNPGGIFVAQNGVCFLQQDEALDSHRKLSHYFSDVGFYQAAIPTYYGGIMTFAWATNNDALRHLSSEIIQARFHAAGLKCRYYNPAIHAAAFALPQYLHDALSAQ.

The PABS domain occupies 5–238 (TMWHETLHDQ…GIMTFAWATN (234 aa)). Gln33 is an S-methyl-5'-thioadenosine binding site. Spermidine-binding residues include His64 and Asp88. S-methyl-5'-thioadenosine-binding positions include Glu108 and 140–141 (DG). Asp158 (proton acceptor) is an active-site residue. A spermidine-binding site is contributed by 158–161 (DCTD). S-methyl-5'-thioadenosine is bound at residue Pro165.

This sequence belongs to the spermidine/spermine synthase family. Homodimer or homotetramer.

The protein resides in the cytoplasm. The catalysed reaction is S-adenosyl 3-(methylsulfanyl)propylamine + putrescine = S-methyl-5'-thioadenosine + spermidine + H(+). It participates in amine and polyamine biosynthesis; spermidine biosynthesis; spermidine from putrescine: step 1/1. Its function is as follows. Catalyzes the irreversible transfer of a propylamine group from the amino donor S-adenosylmethioninamine (decarboxy-AdoMet) to putrescine (1,4-diaminobutane) to yield spermidine. This chain is Polyamine aminopropyltransferase, found in Salmonella paratyphi B (strain ATCC BAA-1250 / SPB7).